Here is a 429-residue protein sequence, read N- to C-terminus: Glutamate-1-semialdehyde 2,1-aminomutase 1 (429 aa).

The residue at position 268 (Lys268) is an N6-(pyridoxal phosphate)lysine.

This sequence belongs to the class-III pyridoxal-phosphate-dependent aminotransferase family. HemL subfamily. In terms of assembly, homodimer. Requires pyridoxal 5'-phosphate as cofactor.

The protein localises to the cytoplasm. The catalysed reaction is (S)-4-amino-5-oxopentanoate = 5-aminolevulinate. Its pathway is porphyrin-containing compound metabolism; protoporphyrin-IX biosynthesis; 5-aminolevulinate from L-glutamyl-tRNA(Glu): step 2/2. This chain is Glutamate-1-semialdehyde 2,1-aminomutase 1, found in Staphylococcus saprophyticus subsp. saprophyticus (strain ATCC 15305 / DSM 20229 / NCIMB 8711 / NCTC 7292 / S-41).